The primary structure comprises 300 residues: GTPase Era (300 aa).

Residues 4–173 (KYGIVAIVGK…INTIKNYLHK (170 aa)) enclose the Era-type G domain. A G1 region spans residues 12-19 (GKPNVGKS). Residue 12–19 (GKPNVGKS) participates in GTP binding. A G2 region spans residues 38–42 (QTTRN). The segment at 59 to 62 (DTPG) is G3. Residues 59 to 63 (DTPGF) and 122 to 125 (SKAE) contribute to the GTP site. The G4 stretch occupies residues 122-125 (SKAE). The G5 stretch occupies residues 152–154 (ISA). The KH type-2 domain maps to 204–282 (LNHEVPHGVG…SLTIFVKVEN (79 aa)).

This sequence belongs to the TRAFAC class TrmE-Era-EngA-EngB-Septin-like GTPase superfamily. Era GTPase family. In terms of assembly, monomer.

It is found in the cytoplasm. Its subcellular location is the cell membrane. An essential GTPase that binds both GDP and GTP, with rapid nucleotide exchange. Plays a role in 16S rRNA processing and 30S ribosomal subunit biogenesis and possibly also in cell cycle regulation and energy metabolism. The chain is GTPase Era from Ureaplasma parvum serovar 3 (strain ATCC 27815 / 27 / NCTC 11736).